The primary structure comprises 112 residues: DNA-binding protein PF1087 (112 aa).

Belongs to the PDCD5 family.

In Pyrococcus furiosus (strain ATCC 43587 / DSM 3638 / JCM 8422 / Vc1), this protein is DNA-binding protein PF1087.